The sequence spans 125 residues: Classical arabinogalactan protein 27 (125 aa).

The first 21 residues, 1 to 21, serve as a signal peptide directing secretion; the sequence is MASSILLTLITFIFLSSLSLS. Residues 20-36 show a composition bias toward low complexity; that stretch reads LSSPTTNTIPSSQTISP. A disordered region spans residues 20 to 95; the sequence is LSSPTTNTIP…ASPPASSLAS (76 aa). Positions 53–66 are enriched in polar residues; the sequence is AVSSTQTIPSSSTL. Low complexity predominate over residues 77–95; that stretch reads DPDPAFAPSASPPASSLAS. Ser98 is lipidated: GPI-anchor amidated serine. A propeptide spans 99–125 (removed in mature form); the sequence is QAPGVFIYFVFAAVYCFSLRLLAVSAI.

This sequence belongs to the classical AGP family. O-glycosylated on the hydroxyproline residues.

It is found in the cell membrane. Proteoglycan that seems to be implicated in diverse developmental roles such as differentiation, cell-cell recognition, embryogenesis and programmed cell death. The protein is Classical arabinogalactan protein 27 (AGP27) of Arabidopsis thaliana (Mouse-ear cress).